The primary structure comprises 392 residues: Tryptophan synthase beta chain (392 aa).

K84 bears the N6-(pyridoxal phosphate)lysine mark.

This sequence belongs to the TrpB family. Tetramer of two alpha and two beta chains. Requires pyridoxal 5'-phosphate as cofactor.

The enzyme catalyses (1S,2R)-1-C-(indol-3-yl)glycerol 3-phosphate + L-serine = D-glyceraldehyde 3-phosphate + L-tryptophan + H2O. Its pathway is amino-acid biosynthesis; L-tryptophan biosynthesis; L-tryptophan from chorismate: step 5/5. In terms of biological role, the beta subunit is responsible for the synthesis of L-tryptophan from indole and L-serine. This is Tryptophan synthase beta chain (trpB) from Chlamydia trachomatis serovar D (strain ATCC VR-885 / DSM 19411 / UW-3/Cx).